The chain runs to 356 residues: MRFSSSFLSVLALASQALAFPLNDLPTTDSGLEVKLTSVGNTRMKAVLTNTADHDLSFLKFNTFFDDAPTQKVRIAKDGSLVPFNGIHRYYNIDDLPQEAFIPLAPGESVEAEFDIAETSDLSAGGSYKIFASGVIPIVAGPGIKVTSAVSFSTDEMTVDVDGAEAAQVQSALPEATLDKRTRIDRNTCTGNYYNALARALQTAAGYASRAAQAAQAGNRFQEFFKTTSPQVRQNVAARFSAIAQECRSPSGGRTTYHCQDVYRACQQGIIAYTIPARSAVVNCPPYWRLPAVVNQGFAPDMGYVVVHEFAHAPSIFRPGTVDHAYGYAQCVRLNSQQALSNADNYALFAAAASRR.

The signal sequence occupies residues 1–19 (MRFSSSFLSVLALASQALA). Positions 20-181 (FPLNDLPTTD…ALPEATLDKR (162 aa)) are excised as a propeptide. 2 cysteine pairs are disulfide-bonded: cysteine 189–cysteine 259 and cysteine 266–cysteine 284. Residue histidine 308 participates in Zn(2+) binding. The active site involves glutamate 309. Residues histidine 312 and aspartate 323 each contribute to the Zn(2+) site.

The protein belongs to the peptidase M35 family. It depends on Zn(2+) as a cofactor.

It is found in the secreted. It catalyses the reaction Preferential cleavage of bonds with hydrophobic residues in P1'. Also 3-Asn-|-Gln-4 and 8-Gly-|-Ser-9 bonds in insulin B chain.. In terms of biological role, secreted metalloproteinase that allows assimilation of proteinaceous substrates. Shows high activities on basic nuclear substrates such as histone and protamine. This chain is Neutral protease 2 homolog UREG_03761, found in Uncinocarpus reesii (strain UAMH 1704).